The sequence spans 326 residues: MYGIEYTTVLTFLISVILLNYVLKSLTRIMDFIIYRFLLIIVILSPLLNAQNYGINLPITGSMDTPYTNSTREEVFLTSTLCLYYPTEAATEINDNSWKDTLSQLFLTKGWPTGSVYFKDYTDIASFSVDPQMYCDYNLVLMKYDATLQLDMSELADLLLNEWLCNPMDITLYYYQQTDEANKWISMGSSCTIKVCPLNTQTLGIGCLTTDTNTFEEVATAEKLVITDVVDGVNHKLNVTTNTCTIRNCKKLGPRENVAVIQVGGSDVLDITADPTTMPQTERMMRVNWKKWWQVFYTIVDYVNQIVQAMSKRSRSLNSAAFYYRV.

The signal sequence occupies residues 1–50; the sequence is MYGIEYTTVLTFLISVILLNYVLKSLTRIMDFIIYRFLLIIVILSPLLNA. A glycan (N-linked (GlcNAc...) asparagine; by host) is linked at asparagine 69. Intrachain disulfides connect cysteine 82/cysteine 135, cysteine 165/cysteine 249, cysteine 191/cysteine 244, and cysteine 196/cysteine 207. Aspartate 95 contacts Ca(2+). The segment at 165–167 is CNP motif; interaction with ITGAV/ITGB3; the sequence is CNP. Ca(2+) is bound by residues glutamine 177, glycine 206, threonine 214, glutamate 216, aspartate 228, valine 229, and aspartate 231. Asparagine 238 carries an N-linked (GlcNAc...) asparagine; by host glycan. The interval 253–255 is GPR motif; interaction with ITGAX/ITGB2; the sequence is GPR. Aspartate 301 serves as a coordination point for Ca(2+).

Belongs to the rotavirus VP7 family. As to quaternary structure, homotrimer; disulfide-linked. 2 Ca(2+) ions bound at each subunit interface in the trimer hold the trimer together. Interacts with the intermediate capsid protein VP6. Interacts with the outer capsid protein VP5*. N-glycosylated. Post-translationally, the N-terminus is blocked possibly by pyroglutamic acid.

The protein resides in the virion. Its subcellular location is the host endoplasmic reticulum lumen. In terms of biological role, calcium-binding protein that interacts with rotavirus cell receptors once the initial attachment by VP4 has been achieved. Rotavirus attachment and entry into the host cell probably involves multiple sequential contacts between the outer capsid proteins VP4 and VP7, and the cell receptors. Following entry into the host cell, low intracellular or intravesicular Ca(2+) concentration probably causes the calcium-stabilized VP7 trimers to dissociate from the virion. This step is probably necessary for the membrane-disrupting entry step and the release of VP4, which is locked onto the virion by VP7. This chain is Outer capsid glycoprotein VP7, found in Homo sapiens (Human).